Consider the following 351-residue polypeptide: Phosphoribosylformylglycinamidine cyclo-ligase (351 aa).

This sequence belongs to the AIR synthase family.

Its subcellular location is the cytoplasm. The enzyme catalyses 2-formamido-N(1)-(5-O-phospho-beta-D-ribosyl)acetamidine + ATP = 5-amino-1-(5-phospho-beta-D-ribosyl)imidazole + ADP + phosphate + H(+). It participates in purine metabolism; IMP biosynthesis via de novo pathway; 5-amino-1-(5-phospho-D-ribosyl)imidazole from N(2)-formyl-N(1)-(5-phospho-D-ribosyl)glycinamide: step 2/2. This is Phosphoribosylformylglycinamidine cyclo-ligase from Burkholderia pseudomallei (strain 1710b).